Here is a 550-residue protein sequence, read N- to C-terminus: MADVMEQNLLQTAVLNRTSFHFQPQRNWLNDPNAPMYYKGFYHLFYQNNPLAPEFSRTRIIWGHSVSQDMVNWIQLEPALVPSESFDINSCWSGSATILPDGRPVILYTGLDVNNKQQVTVVAEPKDVSDPLLREWVKPKYNPVMVPPSNVPFNCFRDPTEAWKGQDGKWRVLIGAKEKDTEKGMAILYRSDDFVQWTKYPVPLLESEGTGMWECPDFFPVSITGKEGVDTSVNNASVRHVLKASFGGNDCYVIGKYSSETEDFSADYEFTNTSADLRYDHGTFYASKAFFDSVKNRRINWGWVIETDSKEDDFKKGWAGLMTLPREIWMDTSGKKLMQWPIEEINNLRTKSVSLDDCYEFKTGSTFEISGITAAQADVEVTFNLPFLENNPEILDADQVDDATLFDRDSSVGCVYGPFGLLALASSDLSEQTAIFFKVIRRGNGYAVVMCSSEKRSSLRDNIKKSSHGAFLDIDPRHEKISLRCLIDHSIIESYGVGGKTVITSRVYPKLAIGEAAKLYVFNDGENGVIMTSLEAWSMRNAQINSNPTY.

Substrate-binding positions include tryptophan 28 to aspartate 31, glutamine 47, tryptophan 92 to serine 93, arginine 157 to aspartate 158, and glutamate 214. Aspartate 31 is an active-site residue. Residues asparagine 235 and asparagine 272 are each glycosylated (N-linked (GlcNAc...) asparagine).

The protein belongs to the glycosyl hydrolase 32 family. As to expression, expressed in seedlings and leaves, and, to a lower extent, in flowers and seeds.

The protein resides in the secreted. Its subcellular location is the extracellular space. The protein localises to the apoplast. It is found in the cell wall. The catalysed reaction is Hydrolysis of terminal, non-reducing (2-&gt;1)- and (2-&gt;6)-linked beta-D-fructofuranose residues in fructans.. Functionally, 6 and 1-fructan exohydrolase that can degrade both inulin and levan-type fructans, such as phlein, levan, neokestose, levanbiose, 6-kestose, 1-kestose, inulin, and 1,1-nystose. The sequence is that of Beta-fructofuranosidase, insoluble isoenzyme CWINV6 (CWINV6) from Arabidopsis thaliana (Mouse-ear cress).